A 430-amino-acid polypeptide reads, in one-letter code: Pre-B-cell leukemia transcription factor 1 (430 aa).

Positions 1 to 40 are disordered; that stretch reads MDEQPRLMHSHAGVGMAGHPGLSQHLQDGAGGTEGEGGRK. The 195-residue stretch at 38 to 232 folds into the PBC domain; the sequence is GRKQDIGDIL…VMILRSRFLD (195 aa). The tract at residues 45-124 is PBC-A; that stretch reads DILQQIMTIT…EGVAGPEKGG (80 aa). Positions 127–232 are PBC-B; the sequence is AAAAAAAAAS…VMILRSRFLD (106 aa). The homeobox; TALE-type DNA-binding region spans 233–295; it reads ARRKRRNFNK…NKRIRYKKNI (63 aa). Disordered stretches follow at residues 317 to 338 and 395 to 430; these read SAHG…SSSF and SPQG…DTSN. Positions 323–338 are enriched in low complexity; it reads ANSPSTPNSAGSSSSF. The span at 407-418 shows a compositional bias: polar residues; that stretch reads DATTPSSVTSPT.

Belongs to the TALE/PBX homeobox family. As to quaternary structure, forms a heterodimer with MEIS1 which binds DNA. The PBX1-MEIS1 heterodimer binds a cAMP-responsive sequence in CYP17. It also binds a consensus region in the SOX3 promoter. PBX1 forms heterotrimers with MEIS1 and a number of HOX proteins including HOXA9, HOXD4, HOXD9 and HOXD10. Forms heterodimers with HOXA1, HOXA5, HOXB7 and HOXB8 which bind the 5'-TGATTGAT-3' consensus sequence. Also forms heterodimers with HOXA5, HOXB7, HOXB8, HOXC8 and HOXD4 which bind the 5'-ATCAATCAA-3' consensus sequence. Interacts with PBXIP1. Interacts with TLX1. Interacts with FOXC1. Interacts with MN1. In terms of assembly, interacts with MEIS2 isoform 4, SP1, SP3 and KLF4. Part of a PDX1:PBX1b:MEIS2B complex; PBX1b recruits MEIS2B to the complex. In terms of tissue distribution, expressed in the kidney. Expressed in the endothelial cells of the glomeruli and interstitium (at protein level). Expressed in all tissues except in cells of the B and T lineage. Expressed strongly in kidney and brain.

Its subcellular location is the nucleus. Its function is as follows. Transcription factor which binds the DNA sequence 5'-TGATTGAT-3' as part of a heterodimer with HOX proteins such as HOXA1, HOXA5, HOXB7 and HOXB8. Binds to the DNA sequence 5'-TGATTGAC-3' in complex with a nuclear factor which is not a class I HOX protein. Has also been shown to bind the DNA sequence 5'-ATCAATCAA-3' cooperatively with HOXA5, HOXB7, HOXB8, HOXC8 and HOXD4. Acts as a transcriptional activator of PF4 in complex with MEIS1. Also activates transcription of SOX3 in complex with MEIS1 by binding to the 5'-TGATTGAC-3' consensus sequence. In natural killer cells, binds to the NFIL3 promoter and acts as a transcriptional activator of NFIL3, promoting natural killer cell development. Plays a role in the cAMP-dependent regulation of CYP17A1 gene expression via its cAMP-regulatory sequence (CRS1). Probably in complex with MEIS2, involved in transcriptional regulation by KLF4. Acts as a transcriptional activator of NKX2-5 and a transcriptional repressor of CDKN2B. Together with NKX2-5, required for spleen development through a mechanism that involves CDKN2B repression. As part of a PDX1:PBX1b:MEIS2B complex in pancreatic acinar cells, is involved in the transcriptional activation of the ELA1 enhancer; the complex binds to the enhancer B element and cooperates with the transcription factor 1 complex (PTF1) bound to the enhancer A element. The polypeptide is Pre-B-cell leukemia transcription factor 1 (PBX1) (Homo sapiens (Human)).